Reading from the N-terminus, the 216-residue chain is Chloramphenicol acetyltransferase (216 aa).

Residue His189 is the Proton acceptor of the active site.

It belongs to the chloramphenicol acetyltransferase family. As to quaternary structure, homotrimer.

The enzyme catalyses chloramphenicol + acetyl-CoA = chloramphenicol 3-acetate + CoA. In terms of biological role, this enzyme is an effector of chloramphenicol resistance in bacteria. The polypeptide is Chloramphenicol acetyltransferase (cat) (Staphylococcus aureus).